Here is a 64-residue protein sequence, read N- to C-terminus: Large ribosomal subunit protein bL32 (64 aa).

The interval 1–20 (MALPKYKTSRANTHSRRANW) is disordered.

It belongs to the bacterial ribosomal protein bL32 family.

This is Large ribosomal subunit protein bL32 from Bifidobacterium adolescentis (strain ATCC 15703 / DSM 20083 / NCTC 11814 / E194a).